The sequence spans 166 residues: Crossover junction endodeoxyribonuclease RuvC (166 aa).

Active-site residues include aspartate 12, glutamate 71, and aspartate 143. Mg(2+)-binding residues include aspartate 12, glutamate 71, and aspartate 143.

It belongs to the RuvC family. In terms of assembly, homodimer which binds Holliday junction (HJ) DNA. The HJ becomes 2-fold symmetrical on binding to RuvC with unstacked arms; it has a different conformation from HJ DNA in complex with RuvA. In the full resolvosome a probable DNA-RuvA(4)-RuvB(12)-RuvC(2) complex forms which resolves the HJ. Mg(2+) serves as cofactor.

It localises to the cytoplasm. It carries out the reaction Endonucleolytic cleavage at a junction such as a reciprocal single-stranded crossover between two homologous DNA duplexes (Holliday junction).. Functionally, the RuvA-RuvB-RuvC complex processes Holliday junction (HJ) DNA during genetic recombination and DNA repair. Endonuclease that resolves HJ intermediates. Cleaves cruciform DNA by making single-stranded nicks across the HJ at symmetrical positions within the homologous arms, yielding a 5'-phosphate and a 3'-hydroxyl group; requires a central core of homology in the junction. The consensus cleavage sequence is 5'-(A/T)TT(C/G)-3'. Cleavage occurs on the 3'-side of the TT dinucleotide at the point of strand exchange. HJ branch migration catalyzed by RuvA-RuvB allows RuvC to scan DNA until it finds its consensus sequence, where it cleaves and resolves the cruciform DNA. The sequence is that of Crossover junction endodeoxyribonuclease RuvC from Oleidesulfovibrio alaskensis (strain ATCC BAA-1058 / DSM 17464 / G20) (Desulfovibrio alaskensis).